Consider the following 116-residue polypeptide: Putative RNase MJ0125 (116 aa).

Residues Arg76 and His81 contribute to the active site. An RX(4)HXY motif motif is present at residues 76–83 (RDKLIHQY). At Tyr83 the chain carries O-di-AMP-tyrosine.

This sequence belongs to the HepT RNase toxin family. Homodimer, probably forms a complex with cognate antitoxin MJ0126. In terms of processing, modified by cognate antitoxin MJ0126; probably at least 2 successive AMPylation events occur on Tyr-83.

Its function is as follows. Probable toxic component of a putative type VII toxin-antitoxin (TA) system, probably an RNase. Probably neutralized by cognate antitoxin MJ0126. Neutralization may be due to AMPylation by MJ0126. The sequence is that of Putative RNase MJ0125 from Methanocaldococcus jannaschii (strain ATCC 43067 / DSM 2661 / JAL-1 / JCM 10045 / NBRC 100440) (Methanococcus jannaschii).